A 203-amino-acid polypeptide reads, in one-letter code: A-type ATP synthase subunit E (203 aa).

Belongs to the V-ATPase E subunit family. As to quaternary structure, has multiple subunits with at least A(3), B(3), C, D, E, F, H, I and proteolipid K(x).

The protein localises to the cell membrane. Functionally, component of the A-type ATP synthase that produces ATP from ADP in the presence of a proton gradient across the membrane. The protein is A-type ATP synthase subunit E of Methanococcus aeolicus (strain ATCC BAA-1280 / DSM 17508 / OCM 812 / Nankai-3).